A 379-amino-acid chain; its full sequence is L-lactate dehydrogenase (379 aa).

The region spanning methionine 1–proline 379 is the FMN hydroxy acid dehydrogenase domain. Tyrosine 24 is a binding site for substrate. Serine 106 and glutamine 127 together coordinate FMN. Tyrosine 129 is a substrate binding site. Threonine 155 contributes to the FMN binding site. Arginine 164 contacts substrate. An FMN-binding site is contributed by lysine 251. Residue histidine 275 is the Proton acceptor of the active site. Residue arginine 278 participates in substrate binding. An FMN-binding site is contributed by aspartate 306 to arginine 330.

Belongs to the FMN-dependent alpha-hydroxy acid dehydrogenase family. FMN is required as a cofactor.

The protein localises to the cell inner membrane. It carries out the reaction (S)-lactate + A = pyruvate + AH2. Functionally, catalyzes the conversion of L-lactate to pyruvate. Is coupled to the respiratory chain. The protein is L-lactate dehydrogenase of Vibrio parahaemolyticus serotype O3:K6 (strain RIMD 2210633).